A 295-amino-acid polypeptide reads, in one-letter code: uncharacterized protein (295 aa).

2 disordered regions span residues Val33 to Ser52 and Leu180 to Lys295. Phosphoserine is present on Ser50. Polar residues-rich tracts occupy residues Gln205–Ile217 and Thr241–Pro251. The segment covering Glu267–Pro276 has biased composition (acidic residues). The span at Glu277–Ser289 shows a compositional bias: low complexity.

This is an uncharacterized protein from Homo sapiens (Human).